A 578-amino-acid chain; its full sequence is Proline--tRNA ligase (578 aa).

It belongs to the class-II aminoacyl-tRNA synthetase family. ProS type 1 subfamily. In terms of assembly, homodimer.

Its subcellular location is the cytoplasm. It carries out the reaction tRNA(Pro) + L-proline + ATP = L-prolyl-tRNA(Pro) + AMP + diphosphate. Its function is as follows. Catalyzes the attachment of proline to tRNA(Pro) in a two-step reaction: proline is first activated by ATP to form Pro-AMP and then transferred to the acceptor end of tRNA(Pro). As ProRS can inadvertently accommodate and process non-cognate amino acids such as alanine and cysteine, to avoid such errors it has two additional distinct editing activities against alanine. One activity is designated as 'pretransfer' editing and involves the tRNA(Pro)-independent hydrolysis of activated Ala-AMP. The other activity is designated 'posttransfer' editing and involves deacylation of mischarged Ala-tRNA(Pro). The misacylated Cys-tRNA(Pro) is not edited by ProRS. The polypeptide is Proline--tRNA ligase (Burkholderia mallei (strain ATCC 23344)).